Here is a 203-residue protein sequence, read N- to C-terminus: Outer-membrane lipoprotein LolB (203 aa).

The signal sequence occupies residues 1-22 (MPVNLNHTLLLCLLVAASLLSG). C23 carries N-palmitoyl cysteine lipidation. Residue C23 is the site of S-diacylglycerol cysteine attachment.

This sequence belongs to the LolB family. As to quaternary structure, monomer.

It is found in the cell outer membrane. In terms of biological role, plays a critical role in the incorporation of lipoproteins in the outer membrane after they are released by the LolA protein. This Shewanella denitrificans (strain OS217 / ATCC BAA-1090 / DSM 15013) protein is Outer-membrane lipoprotein LolB.